Here is a 471-residue protein sequence, read N- to C-terminus: Ubiquitin carboxyl-terminal hydrolase calypso (471 aa).

The UCH catalytic domain occupies 45 to 276 (GWLELESDPG…IRFNLMAVVP (232 aa)). The active-site Nucleophile is Cys131. His213 (proton donor) is an active-site residue. Residues 375–403 (NYDKFICTFLSMLAHQGVLGELVSQHLLP) enclose the ULD domain. The interval 405 to 471 (KKVSGQGAAN…KGRNKCRKRK (67 aa)) is positively charged C-terminal tail required for binding nucleosomes. A disordered region spans residues 410–471 (QGAANRISKQ…KGRNKCRKRK (62 aa)). Low complexity predominate over residues 420 to 447 (STTASAGGSTTGATASTPKTQQQQAAAA). The span at 457 to 471 (PGRRRKGRNKCRKRK) shows a compositional bias: basic residues.

The protein belongs to the peptidase C12 family. BAP1 subfamily. As to quaternary structure, catalytic component of the polycomb repressive deubiquitinase (PR-DUB) complex, at least composed of caly/calypso, Asx and sba (MBD5/6 homolog). The PR-DUB complex associates with nucleosomes to mediate deubiquitination of histone H2AK118ub1 substrates; the association requires the positively charged C-terminal tail of caly, probably due to direct binding of DNA. Interacts (via ULD domain) with Asx (via DEUBAD domain); the interaction produces a stable heterodimer with a composite binding site for ubiquitin. Homodimerizes (via coiled-coil hinge-region between the UCH and ULD domains) to mediate assembly of 2 copies of the caly-Asx heterodimer into a bisymmetric tetramer; dimerization enhances PR-DUB association with nucleosomes.

The protein localises to the nucleus. It carries out the reaction Thiol-dependent hydrolysis of ester, thioester, amide, peptide and isopeptide bonds formed by the C-terminal Gly of ubiquitin (a 76-residue protein attached to proteins as an intracellular targeting signal).. Its function is as follows. Catalytic component of the polycomb repressive deubiquitinase (PR-DUB) complex, a complex that specifically mediates deubiquitination of histone H2A monoubiquitinated at 'Lys-119' (H2AK118ub1). Mediates bisymmetric organization of the PR-DUB complex and is involved in association with nucleosomes to mediate deubiquitination. Does not deubiquitinate monoubiquitinated histone H2B. Required to maintain the transcriptionally repressive state of homeotic genes throughout development. The PR-DUB complex has weak or no activity toward 'Lys-48'- and 'Lys-63'-linked polyubiquitin chains. Polycomb group (PcG) protein. The chain is Ubiquitin carboxyl-terminal hydrolase calypso from Drosophila yakuba (Fruit fly).